The chain runs to 103 residues: Large ribosomal subunit protein mL41 (103 aa).

The protein belongs to the mitochondrion-specific ribosomal protein mL41 family. In terms of assembly, component of the mitochondrial large ribosomal subunit (mt-LSU). Mature N.crassa 74S mitochondrial ribosomes consist of a small (37S) and a large (54S) subunit. The 37S small subunit contains a 16S ribosomal RNA (16S mt-rRNA) and 32 different proteins. The 54S large subunit contains a 23S rRNA (23S mt-rRNA) and 42 different proteins.

Its subcellular location is the mitochondrion. Component of the mitochondrial ribosome (mitoribosome), a dedicated translation machinery responsible for the synthesis of mitochondrial genome-encoded proteins, including at least some of the essential transmembrane subunits of the mitochondrial respiratory chain. The mitoribosomes are attached to the mitochondrial inner membrane and translation products are cotranslationally integrated into the membrane. In Neurospora crassa (strain ATCC 24698 / 74-OR23-1A / CBS 708.71 / DSM 1257 / FGSC 987), this protein is Large ribosomal subunit protein mL41 (mrpl27).